The following is a 350-amino-acid chain: GTPase Obg (350 aa).

Positions 1–175 (MFVDNIRIFA…GVFFMELRRI (175 aa)) constitute an Obg domain. Positions 176 to 345 (ADAGLVGYPN…LRNRLDELVG (170 aa)) constitute an OBG-type G domain. GTP is bound by residues 182 to 189 (GYPNAGKS), 207 to 211 (FTTLQ), 229 to 232 (DIPG), 299 to 302 (NKMD), and 326 to 328 (SAL). Positions 189 and 209 each coordinate Mg(2+).

It belongs to the TRAFAC class OBG-HflX-like GTPase superfamily. OBG GTPase family. As to quaternary structure, monomer. Mg(2+) is required as a cofactor.

It localises to the cytoplasm. In terms of biological role, an essential GTPase which binds GTP, GDP and possibly (p)ppGpp with moderate affinity, with high nucleotide exchange rates and a fairly low GTP hydrolysis rate. Plays a role in control of the cell cycle, stress response, ribosome biogenesis and in those bacteria that undergo differentiation, in morphogenesis control. This is GTPase Obg from Akkermansia muciniphila (strain ATCC BAA-835 / DSM 22959 / JCM 33894 / BCRC 81048 / CCUG 64013 / CIP 107961 / Muc).